A 133-amino-acid chain; its full sequence is Small ribosomal subunit protein eS8 (133 aa).

Residues Met1–Asp22 form a disordered region.

It belongs to the eukaryotic ribosomal protein eS8 family. As to quaternary structure, part of the 30S ribosomal subunit.

The sequence is that of Small ribosomal subunit protein eS8 from Saccharolobus islandicus (strain M.14.25 / Kamchatka #1) (Sulfolobus islandicus).